The following is a 190-amino-acid chain: Cancer-related nucleoside-triphosphatase homolog (190 aa).

ATP contacts are provided by residues 9 to 16 (GPPGVGKT) and 109 to 116 (VCIIDEIG). Lys165 is modified (N6-acetyllysine).

It belongs to the THEP1 NTPase family. As to quaternary structure, monomer.

It catalyses the reaction a ribonucleoside 5'-triphosphate + H2O = a ribonucleoside 5'-diphosphate + phosphate + H(+). The catalysed reaction is 5-methyl-UTP + H2O = 5-methyl-UDP + phosphate + H(+). It carries out the reaction CTP + H2O = CDP + phosphate + H(+). The enzyme catalyses ATP + H2O = ADP + phosphate + H(+). It catalyses the reaction GTP + H2O = GDP + phosphate + H(+). Its function is as follows. Has nucleotide phosphatase activity towards ATP, GTP, CTP, TTP and UTP. Hydrolyzes nucleoside diphosphates with lower efficiency. This is Cancer-related nucleoside-triphosphatase homolog from Mus musculus (Mouse).